Consider the following 238-residue polypeptide: Uridylate kinase (238 aa).

An ATP-binding site is contributed by 12–15 (KLSG). Residue Gly54 participates in UMP binding. Residues Gly55 and Arg59 each coordinate ATP. UMP is bound by residues Asp74 and 135–142 (TGNPFFTT). Positions 162, 168, and 171 each coordinate ATP.

The protein belongs to the UMP kinase family. In terms of assembly, homohexamer.

The protein localises to the cytoplasm. It carries out the reaction UMP + ATP = UDP + ADP. It functions in the pathway pyrimidine metabolism; CTP biosynthesis via de novo pathway; UDP from UMP (UMPK route): step 1/1. Its activity is regulated as follows. Inhibited by UTP. In terms of biological role, catalyzes the reversible phosphorylation of UMP to UDP. This is Uridylate kinase from Bordetella pertussis (strain Tohama I / ATCC BAA-589 / NCTC 13251).